Here is a 377-residue protein sequence, read N- to C-terminus: uncharacterized protein (377 aa).

An N-terminal signal peptide occupies residues 1-23; sequence MLKFRNFFKLTLLTLASAFFLSG. Residue C24 is the site of N-palmitoyl cysteine attachment. C24 carries the S-diacylglycerol cysteine lipid modification.

It is found in the cell membrane. This is an uncharacterized protein from Mycoplasma genitalium (strain ATCC 33530 / DSM 19775 / NCTC 10195 / G37) (Mycoplasmoides genitalium).